The sequence spans 232 residues: 5'-methylthioadenosine/S-adenosylhomocysteine nucleosidase (232 aa).

Glu12 serves as the catalytic Proton acceptor. Residues Gly78, Met153, and 174–175 (ME) contribute to the substrate site. Catalysis depends on Asp198, which acts as the Proton donor.

This sequence belongs to the PNP/UDP phosphorylase family. MtnN subfamily.

The enzyme catalyses S-adenosyl-L-homocysteine + H2O = S-(5-deoxy-D-ribos-5-yl)-L-homocysteine + adenine. It carries out the reaction S-methyl-5'-thioadenosine + H2O = 5-(methylsulfanyl)-D-ribose + adenine. The catalysed reaction is 5'-deoxyadenosine + H2O = 5-deoxy-D-ribose + adenine. It functions in the pathway amino-acid biosynthesis; L-methionine biosynthesis via salvage pathway; S-methyl-5-thio-alpha-D-ribose 1-phosphate from S-methyl-5'-thioadenosine (hydrolase route): step 1/2. In terms of biological role, catalyzes the irreversible cleavage of the glycosidic bond in both 5'-methylthioadenosine (MTA) and S-adenosylhomocysteine (SAH/AdoHcy) to adenine and the corresponding thioribose, 5'-methylthioribose and S-ribosylhomocysteine, respectively. Also cleaves 5'-deoxyadenosine, a toxic by-product of radical S-adenosylmethionine (SAM) enzymes, into 5-deoxyribose and adenine. This is 5'-methylthioadenosine/S-adenosylhomocysteine nucleosidase from Anoxybacillus flavithermus (strain DSM 21510 / WK1).